The primary structure comprises 207 residues: Large ribosomal subunit protein uL4 (207 aa).

Positions 50-76 are disordered; the sequence is AVKNRSAVSGGGRKPWKQKGTGRARQG.

Belongs to the universal ribosomal protein uL4 family. Part of the 50S ribosomal subunit.

One of the primary rRNA binding proteins, this protein initially binds near the 5'-end of the 23S rRNA. It is important during the early stages of 50S assembly. It makes multiple contacts with different domains of the 23S rRNA in the assembled 50S subunit and ribosome. Its function is as follows. Forms part of the polypeptide exit tunnel. This Staphylococcus aureus (strain JH9) protein is Large ribosomal subunit protein uL4.